A 315-amino-acid chain; its full sequence is Probable cell division protein kinase ECU11_1290 (315 aa).

The Protein kinase domain occupies 13–294; that stretch reads YEKVCRISSG…ASQGLCSGFV (282 aa). Residues 19–27 and Lys-42 each bind ATP; that span reads ISSGSFGNV. Residue Asp-138 is the Proton acceptor of the active site.

It belongs to the protein kinase superfamily. CMGC Ser/Thr protein kinase family. CDC2/CDKX subfamily.

The protein localises to the nucleus. The catalysed reaction is L-seryl-[protein] + ATP = O-phospho-L-seryl-[protein] + ADP + H(+). The enzyme catalyses L-threonyl-[protein] + ATP = O-phospho-L-threonyl-[protein] + ADP + H(+). May play a role in the control of the eukaryotic cell cycle. The protein is Probable cell division protein kinase ECU11_1290 of Encephalitozoon cuniculi (strain GB-M1) (Microsporidian parasite).